Reading from the N-terminus, the 504-residue chain is Cytochrome P450 3A41 (504 aa).

Residue Cys-443 coordinates heme.

The protein belongs to the cytochrome P450 family. The cofactor is heme. In terms of tissue distribution, expressed in liver. Also expressed in the kidneys of female mice, with traces in the stomach, ovary, and heart of female mice and in the testis of male mice.

The protein resides in the endoplasmic reticulum membrane. Its subcellular location is the microsome membrane. The catalysed reaction is an organic molecule + reduced [NADPH--hemoprotein reductase] + O2 = an alcohol + oxidized [NADPH--hemoprotein reductase] + H2O + H(+). This Mus musculus (Mouse) protein is Cytochrome P450 3A41 (Cyp3a41a).